Consider the following 157-residue polypeptide: Protein MG115 homolog (157 aa).

Belongs to the CinA family.

This Mycoplasma pneumoniae (strain ATCC 29342 / M129 / Subtype 1) (Mycoplasmoides pneumoniae) protein is Protein MG115 homolog.